Consider the following 483-residue polypeptide: Protein LMBR1L (483 aa).

Topologically, residues 1–21 are extracellular; that stretch reads MEVNQDVSVREQIFHDWVREC. Residues 22-42 traverse the membrane as a helical segment; the sequence is IICSLLFSTLYLLSYIVITKF. Residues 43 to 60 lie on the Cytoplasmic side of the membrane; the sequence is KKHADFATVDVEDAAVNR. A helical membrane pass occupies residues 61-81; the sequence is IALWMCTFTLAVSVGAVLLLP. Topologically, residues 82–112 are extracellular; the sequence is FSIISNEVLLSVPHNYYIQWLNGSLIHGLWN. The chain crosses the membrane as a helical span at residues 113–133; that stretch reads LVFLFSNLSLVFLMPFAYLFT. Over 134–153 the chain is Cytoplasmic; sequence EAEGFAGSKKGVMSRVYETT. The chain crosses the membrane as a helical span at residues 154-174; it reads VVLLLLTLLVFGIVWVASAIF. Residues 175-194 are Extracellular-facing; sequence DDDSAGRESLYDLWEYYLPY. Residues 195 to 215 traverse the membrane as a helical segment; the sequence is LYSGISLFGVLLLLLCTPFGL. The Cytoplasmic segment spans residues 216-294; sequence SRMFSVTGNL…RRRASPWQRN (79 aa). The chain crosses the membrane as a helical span at residues 295 to 315; the sequence is LVYPLAMLLLLALTGITVLIV. Residues 316 to 342 lie on the Extracellular side of the membrane; it reads CVNVLELLIDEAAMPKGIQGSQLGKVS. The chain crosses the membrane as a helical span at residues 343–363; that stretch reads FSVFGSFGAAVQVILIFYLMA. The Cytoplasmic segment spans residues 364–386; that stretch reads SSVVGFYSSPLFIQLLPQKQNTP. A helical membrane pass occupies residues 387 to 407; it reads MTKIIGNCVSLLILSSALPVF. The Extracellular segment spans residues 408–429; it reads SRTLGITRFDLLGDFGRFNWLG. The helical transmembrane segment at 430-450 threads the bilayer; the sequence is NFYLILLYNMMFAGLATLCLV. At 451–483 the chain is on the cytoplasmic side; it reads KKFTWAVQAELIRAFGLDRLPLSVKKIRSQGKA.

The protein belongs to the LIMR family. As to quaternary structure, dimer. Can also form higher oligomers.

The protein localises to the cell membrane. The protein resides in the endoplasmic reticulum membrane. In terms of biological role, may play a role in lymphocyte development by negatively regulating the canonical Wnt signaling pathway. May act as a LCN1 receptor. The sequence is that of Protein LMBR1L (lmbr1l) from Xenopus laevis (African clawed frog).